The primary structure comprises 206 residues: MNPFQKIKSAVNKRQRFFINRTLQRKLTNQGMTVISANCVGAFILHDLHQPFNSPFVNLYLSPQDFLRYLQNIDFYLTQPLTFVQTEKSYPVGKLADLEIHFMHYHSEQEANEKWQLRTSRMKLDNLFIMMTDRDGVTEKDIQLFDQLPFKNKVIFTHKPYPAFKSAYYIKGFEKQNQVGDIFEFSGWNGKKYYDQFDYVKWFNHA.

This is an uncharacterized protein from Haemophilus influenzae (strain ATCC 51907 / DSM 11121 / KW20 / Rd).